The primary structure comprises 488 residues: Proline--tRNA ligase (488 aa).

Belongs to the class-II aminoacyl-tRNA synthetase family. ProS type 3 subfamily. As to quaternary structure, homodimer.

It is found in the cytoplasm. The enzyme catalyses tRNA(Pro) + L-proline + ATP = L-prolyl-tRNA(Pro) + AMP + diphosphate. In terms of biological role, catalyzes the attachment of proline to tRNA(Pro) in a two-step reaction: proline is first activated by ATP to form Pro-AMP and then transferred to the acceptor end of tRNA(Pro). The chain is Proline--tRNA ligase from Borrelia garinii subsp. bavariensis (strain ATCC BAA-2496 / DSM 23469 / PBi) (Borreliella bavariensis).